The chain runs to 221 residues: PKHD-type hydroxylase P9303_20491 (221 aa).

The Fe2OG dioxygenase domain maps to 80–174 (HIHGVMFSRS…RLVCVGWIQS (95 aa)). His98, Asp100, and His155 together coordinate Fe cation. Arg165 is a 2-oxoglutarate binding site.

It depends on Fe(2+) as a cofactor. Requires L-ascorbate as cofactor.

In Prochlorococcus marinus (strain MIT 9303), this protein is PKHD-type hydroxylase P9303_20491.